The primary structure comprises 98 residues: Aspartyl/glutamyl-tRNA(Asn/Gln) amidotransferase subunit C (98 aa).

This sequence belongs to the GatC family. In terms of assembly, heterotrimer of A, B and C subunits.

It carries out the reaction L-glutamyl-tRNA(Gln) + L-glutamine + ATP + H2O = L-glutaminyl-tRNA(Gln) + L-glutamate + ADP + phosphate + H(+). It catalyses the reaction L-aspartyl-tRNA(Asn) + L-glutamine + ATP + H2O = L-asparaginyl-tRNA(Asn) + L-glutamate + ADP + phosphate + 2 H(+). Its function is as follows. Allows the formation of correctly charged Asn-tRNA(Asn) or Gln-tRNA(Gln) through the transamidation of misacylated Asp-tRNA(Asn) or Glu-tRNA(Gln) in organisms which lack either or both of asparaginyl-tRNA or glutaminyl-tRNA synthetases. The reaction takes place in the presence of glutamine and ATP through an activated phospho-Asp-tRNA(Asn) or phospho-Glu-tRNA(Gln). This Arthrobacter sp. (strain FB24) protein is Aspartyl/glutamyl-tRNA(Asn/Gln) amidotransferase subunit C.